The primary structure comprises 182 residues: FMN reductase (NADH) RutF (182 aa).

This sequence belongs to the non-flavoprotein flavin reductase family. RutF subfamily.

It carries out the reaction FMNH2 + NAD(+) = FMN + NADH + 2 H(+). Its function is as follows. Catalyzes the reduction of FMN to FMNH2 which is used to reduce pyrimidine by RutA via the Rut pathway. This chain is FMN reductase (NADH) RutF, found in Yersinia enterocolitica serotype O:8 / biotype 1B (strain NCTC 13174 / 8081).